Here is a 357-residue protein sequence, read N- to C-terminus: Spore wall and anchoring disk complex protein EnP1 (357 aa).

A signal peptide spans 1 to 16 (MKLLGFLIVGLSAISA). A glycan (N-linked (GlcNAc...) asparagine) is linked at N47. The short motif at 150 to 158 (ERRPHYKKI) is the HBM1 element. The short motif at 329–334 (LKKVRG) is the HBM2 element.

It is found in the spore wall. The protein resides in the spore. The protein localises to the perispore. In terms of biological role, spore wall protein involved in the adhesion to host cells surface glycoaminoglycans (GAGs). Microsporidian spore adherence is an integral part of activation and host cell invasion which requires the extrusion at the spore apex of a very long and coiled structure, the polar tube, through which the sporoplasm is pushed to enter into the potential host cell. The chain is Spore wall and anchoring disk complex protein EnP1 (EnP1) from Encephalitozoon cuniculi (strain GB-M1) (Microsporidian parasite).